The primary structure comprises 429 residues: 3-oxo-tetronate kinase (429 aa).

Residues serine 268, 366–369 (GGET), and glycine 410 each bind ATP.

It belongs to the four-carbon acid sugar kinase family.

It catalyses the reaction 3-dehydro-L-erythronate + ATP = 3-dehydro-4-O-phospho-L-erythronate + ADP + H(+). It carries out the reaction 3-dehydro-D-erythronate + ATP = 3-dehydro-4-O-phospho-D-erythronate + ADP + H(+). In terms of biological role, catalyzes the ATP-dependent phosphorylation of 3-oxo-tetronate to 3-oxo-tetronate 4-phosphate. In Pseudomonas savastanoi pv. phaseolicola (strain 1448A / Race 6) (Pseudomonas syringae pv. phaseolicola (strain 1448A / Race 6)), this protein is 3-oxo-tetronate kinase.